The sequence spans 160 residues: Allophycocyanin alpha chain (160 aa).

Asparagine 70 bears the N4-methylasparagine mark. Residue cysteine 80 coordinates (2R,3E)-phycocyanobilin.

It belongs to the phycobiliprotein family. Component of the phycobilisome. Heterodimer of an alpha and a beta chain. In terms of processing, contains one covalently linked phycocyanobilin chromophore.

The protein resides in the cellular thylakoid membrane. Functionally, light-harvesting photosynthetic bile pigment-protein from the phycobiliprotein complex. Allophycocyanin has a maximum absorption at approximately 650 nanometers. The polypeptide is Allophycocyanin alpha chain (apcA) (Anabaena cylindrica).